Consider the following 141-residue polypeptide: Nucleoside diphosphate kinase (141 aa).

Residues Lys-11, Phe-59, Arg-87, Thr-93, Arg-104, and Asn-114 each coordinate ATP. His-117 (pros-phosphohistidine intermediate) is an active-site residue.

The protein belongs to the NDK family. Homotetramer. Mg(2+) is required as a cofactor.

The protein localises to the cytoplasm. It carries out the reaction a 2'-deoxyribonucleoside 5'-diphosphate + ATP = a 2'-deoxyribonucleoside 5'-triphosphate + ADP. The enzyme catalyses a ribonucleoside 5'-diphosphate + ATP = a ribonucleoside 5'-triphosphate + ADP. Functionally, major role in the synthesis of nucleoside triphosphates other than ATP. The ATP gamma phosphate is transferred to the NDP beta phosphate via a ping-pong mechanism, using a phosphorylated active-site intermediate. This Pseudomonas fluorescens (strain SBW25) protein is Nucleoside diphosphate kinase.